The primary structure comprises 289 residues: MSFKDRLFICSQYLLPHHLLSRLIGFAADCRATWFKDRLIAWFARRYQVDMREAQVEDLQAFEHFNAFFTRALKDGARPLAQEPGAVLCPADGAISQLGPIEHGRIFQAKGHSYSLAELLGGDAELAAPFMGGDFATVYLSPRDYHRVHMPLAGTLREMVYVPGRLFSVNQTTAENVPELFARNERVVCLFDTERGPMAVVLVGAMIVASIETVWAGLVTPPKRELKTFRYDEAARAPIRLEKGAELGRFKLGSTAIVLFGPQQVAFNDGLGAASPVRMGECLALPKQS.

Catalysis depends on charge relay system; for autoendoproteolytic cleavage activity residues aspartate 92, histidine 149, and serine 254. Residue serine 254 is the Schiff-base intermediate with substrate; via pyruvic acid; for decarboxylase activity of the active site. Serine 254 is modified (pyruvic acid (Ser); by autocatalysis).

It belongs to the phosphatidylserine decarboxylase family. PSD-B subfamily. Prokaryotic type I sub-subfamily. In terms of assembly, heterodimer of a large membrane-associated beta subunit and a small pyruvoyl-containing alpha subunit. Pyruvate is required as a cofactor. In terms of processing, is synthesized initially as an inactive proenzyme. Formation of the active enzyme involves a self-maturation process in which the active site pyruvoyl group is generated from an internal serine residue via an autocatalytic post-translational modification. Two non-identical subunits are generated from the proenzyme in this reaction, and the pyruvate is formed at the N-terminus of the alpha chain, which is derived from the carboxyl end of the proenzyme. The autoendoproteolytic cleavage occurs by a canonical serine protease mechanism, in which the side chain hydroxyl group of the serine supplies its oxygen atom to form the C-terminus of the beta chain, while the remainder of the serine residue undergoes an oxidative deamination to produce ammonia and the pyruvoyl prosthetic group on the alpha chain. During this reaction, the Ser that is part of the protease active site of the proenzyme becomes the pyruvoyl prosthetic group, which constitutes an essential element of the active site of the mature decarboxylase.

It is found in the cell membrane. The catalysed reaction is a 1,2-diacyl-sn-glycero-3-phospho-L-serine + H(+) = a 1,2-diacyl-sn-glycero-3-phosphoethanolamine + CO2. Its pathway is phospholipid metabolism; phosphatidylethanolamine biosynthesis; phosphatidylethanolamine from CDP-diacylglycerol: step 2/2. In terms of biological role, catalyzes the formation of phosphatidylethanolamine (PtdEtn) from phosphatidylserine (PtdSer). The protein is Phosphatidylserine decarboxylase proenzyme of Pseudomonas aeruginosa (strain ATCC 15692 / DSM 22644 / CIP 104116 / JCM 14847 / LMG 12228 / 1C / PRS 101 / PAO1).